The primary structure comprises 109 residues: Large ribosomal subunit protein uL22 (109 aa).

It belongs to the universal ribosomal protein uL22 family. In terms of assembly, part of the 50S ribosomal subunit.

In terms of biological role, this protein binds specifically to 23S rRNA; its binding is stimulated by other ribosomal proteins, e.g. L4, L17, and L20. It is important during the early stages of 50S assembly. It makes multiple contacts with different domains of the 23S rRNA in the assembled 50S subunit and ribosome. Its function is as follows. The globular domain of the protein is located near the polypeptide exit tunnel on the outside of the subunit, while an extended beta-hairpin is found that lines the wall of the exit tunnel in the center of the 70S ribosome. The polypeptide is Large ribosomal subunit protein uL22 (Methylobacillus flagellatus (strain ATCC 51484 / DSM 6875 / VKM B-1610 / KT)).